The following is a 205-amino-acid chain: UPF0688 protein C1orf174 homolog (205 aa).

Residues 1–18 (MRKRKLSDRVRCSARLKN) show a composition bias toward basic residues. Disordered stretches follow at residues 1 to 128 (MRKR…PSKV) and 184 to 205 (AKEEEEDDDDDYADGLVNEGNI). Positions 46–63 (NTDKKSPKKLENDEKGLM) are enriched in basic and acidic residues. Residues 71–108 (INKTDNTASNESNAGNVNTCPSASPFSDLNEVSRNGLT) show a composition bias toward polar residues. Residues 187–196 (EEEDDDDDYA) are compositionally biased toward acidic residues.

This sequence belongs to the UPF0688 family.

It is found in the nucleus. The polypeptide is UPF0688 protein C1orf174 homolog (Xenopus laevis (African clawed frog)).